We begin with the raw amino-acid sequence, 144 residues long: Large ribosomal subunit protein uL16 (144 aa).

Belongs to the universal ribosomal protein uL16 family. In terms of assembly, part of the 50S ribosomal subunit.

In terms of biological role, binds 23S rRNA and is also seen to make contacts with the A and possibly P site tRNAs. This Ligilactobacillus salivarius (strain UCC118) (Lactobacillus salivarius) protein is Large ribosomal subunit protein uL16.